Consider the following 361-residue polypeptide: UPF0283 membrane protein mlr0776 (361 aa).

The segment at 1–33 (MTAPRKPAAFRIEPEAAPTQETPKARQAELSRK) is disordered. Over residues 23 to 32 (PKARQAELSR) the composition is skewed to basic and acidic residues. 2 consecutive transmembrane segments (helical) span residues 73-93 (LFGS…VGLW) and 108-128 (LGWL…VILI).

This sequence belongs to the UPF0283 family.

The protein localises to the cell inner membrane. The polypeptide is UPF0283 membrane protein mlr0776 (Mesorhizobium japonicum (strain LMG 29417 / CECT 9101 / MAFF 303099) (Mesorhizobium loti (strain MAFF 303099))).